The chain runs to 678 residues: Glutamic acid-rich protein (678 aa).

The N-terminal stretch at M1–K25 is a signal peptide. Over residues E56–V79 the composition is skewed to basic and acidic residues. 3 disordered regions span residues E56 to E194, I225 to N445, and V520 to I678. The span at P80–N107 shows a compositional bias: polar residues. Residues N109 to K120 show a composition bias toward basic and acidic residues. A run of 15 repeats spans residues K120–D122, K123–E125, K126–H128, K129–D131, K132–E134, K135–E137, K138–D140, K141–E143, K144–D146, K147–E149, K150–H152, K153–E155, K156–H158, K159–D161, and K162–K164. The tract at residues K120–K164 is 15 X 3 AA tandem repeats of K-K-[DEHK]. The segment covering K121 to K165 has biased composition (basic residues). Basic and acidic residues-rich tracts occupy residues T231–E329 and P371–S411. 14 repeat units span residues E372 to E376, G377 to E381, E382 to E386, G387 to E391, G392 to E396, E397 to E401, E402 to K406, E407 to S411, K412 to S416, K417 to D421, K422 to D426, K427 to K431, K432 to E436, and K437 to H441. A 9 X 5 AA tandem repeats of [EGK]-E-H-K-[EKS] region spans residues E372–S416. Positions K412–V443 are enriched in basic residues. Residues K417–H441 are 5 X 5 AA tandem repeats of K-[GAV]-K-[KH]-[DKEH]. The segment covering A532 to V565 has biased composition (basic and acidic residues). The span at Q566–E663 shows a compositional bias: acidic residues. The segment covering K667–I678 has biased composition (basic residues).

This chain is Glutamic acid-rich protein (GARP), found in Plasmodium falciparum (isolate FC27 / Papua New Guinea).